The following is a 93-amino-acid chain: Small ribosomal subunit protein uS17 (93 aa).

The protein belongs to the universal ribosomal protein uS17 family. Part of the 30S ribosomal subunit.

Its function is as follows. One of the primary rRNA binding proteins, it binds specifically to the 5'-end of 16S ribosomal RNA. This is Small ribosomal subunit protein uS17 from Corynebacterium aurimucosum (strain ATCC 700975 / DSM 44827 / CIP 107346 / CN-1) (Corynebacterium nigricans).